A 631-amino-acid chain; its full sequence is Occlusion-derived virus envelope protein E66 (631 aa).

This sequence belongs to the baculoviridae E66 family.

It is found in the virion membrane. In terms of biological role, component of the polyhedra envelope. In Leucania separata nucleopolyhedrovirus (LsNPV), this protein is Occlusion-derived virus envelope protein E66.